Reading from the N-terminus, the 558-residue chain is DNA ligase B (558 aa).

Residue lysine 124 is the N6-AMP-lysine intermediate of the active site.

It belongs to the NAD-dependent DNA ligase family. LigB subfamily.

The catalysed reaction is NAD(+) + (deoxyribonucleotide)n-3'-hydroxyl + 5'-phospho-(deoxyribonucleotide)m = (deoxyribonucleotide)n+m + AMP + beta-nicotinamide D-nucleotide.. Its function is as follows. Catalyzes the formation of phosphodiester linkages between 5'-phosphoryl and 3'-hydroxyl groups in double-stranded DNA using NAD as a coenzyme and as the energy source for the reaction. The polypeptide is DNA ligase B (Klebsiella pneumoniae (strain 342)).